A 236-amino-acid polypeptide reads, in one-letter code: Ribosome maturation protein SDO1 homolog (236 aa).

It belongs to the SDO1/SBDS family. In terms of assembly, crystallized in association with 70S ribosomes.

This chain is Ribosome maturation protein SDO1 homolog, found in Thermococcus kodakarensis (strain ATCC BAA-918 / JCM 12380 / KOD1) (Pyrococcus kodakaraensis (strain KOD1)).